We begin with the raw amino-acid sequence, 343 residues long: 4-hydroxy-3-methylbut-2-enyl diphosphate reductase (343 aa).

C18 lines the [4Fe-4S] cluster pocket. Positions 47 and 83 each coordinate (2E)-4-hydroxy-3-methylbut-2-enyl diphosphate. Dimethylallyl diphosphate is bound by residues H47 and H83. H47 and H83 together coordinate isopentenyl diphosphate. Residue C105 participates in [4Fe-4S] cluster binding. Position 133 (H133) interacts with (2E)-4-hydroxy-3-methylbut-2-enyl diphosphate. H133 is a binding site for dimethylallyl diphosphate. Position 133 (H133) interacts with isopentenyl diphosphate. Catalysis depends on E135, which acts as the Proton donor. Position 174 (T174) interacts with (2E)-4-hydroxy-3-methylbut-2-enyl diphosphate. C204 is a binding site for [4Fe-4S] cluster. 4 residues coordinate (2E)-4-hydroxy-3-methylbut-2-enyl diphosphate: S232, S233, N234, and S277. Dimethylallyl diphosphate contacts are provided by S232, S233, N234, and S277. Positions 232, 233, 234, and 277 each coordinate isopentenyl diphosphate.

This sequence belongs to the IspH family. The cofactor is [4Fe-4S] cluster.

It carries out the reaction isopentenyl diphosphate + 2 oxidized [2Fe-2S]-[ferredoxin] + H2O = (2E)-4-hydroxy-3-methylbut-2-enyl diphosphate + 2 reduced [2Fe-2S]-[ferredoxin] + 2 H(+). It catalyses the reaction dimethylallyl diphosphate + 2 oxidized [2Fe-2S]-[ferredoxin] + H2O = (2E)-4-hydroxy-3-methylbut-2-enyl diphosphate + 2 reduced [2Fe-2S]-[ferredoxin] + 2 H(+). The protein operates within isoprenoid biosynthesis; dimethylallyl diphosphate biosynthesis; dimethylallyl diphosphate from (2E)-4-hydroxy-3-methylbutenyl diphosphate: step 1/1. It participates in isoprenoid biosynthesis; isopentenyl diphosphate biosynthesis via DXP pathway; isopentenyl diphosphate from 1-deoxy-D-xylulose 5-phosphate: step 6/6. Its function is as follows. Catalyzes the conversion of 1-hydroxy-2-methyl-2-(E)-butenyl 4-diphosphate (HMBPP) into a mixture of isopentenyl diphosphate (IPP) and dimethylallyl diphosphate (DMAPP). Acts in the terminal step of the DOXP/MEP pathway for isoprenoid precursor biosynthesis. The sequence is that of 4-hydroxy-3-methylbut-2-enyl diphosphate reductase from Bartonella henselae (strain ATCC 49882 / DSM 28221 / CCUG 30454 / Houston 1) (Rochalimaea henselae).